Reading from the N-terminus, the 443-residue chain is Probable 26S proteasome regulatory subunit 4 (443 aa).

Residues 1–53 (MGQQQSGFGGRGNDRGAGDGEKKEKKKYEAPIPSRIGKKKKGSKGPDAASKLP) form a disordered region. A compositionally biased stretch (basic and acidic residues) spans 12 to 29 (GNDRGAGDGEKKEKKKYE). 229 to 236 (GCPGTGKT) contacts ATP.

It belongs to the AAA ATPase family.

The protein resides in the cytoplasm. It is found in the nucleus. The 26S proteasome is involved in the ATP-dependent degradation of ubiquitinated proteins. The regulatory (or ATPase) complex confers ATP dependency and substrate specificity to the 26S complex. May play a role in the degradation of microtubule severing protein mei-1. This Caenorhabditis elegans protein is Probable 26S proteasome regulatory subunit 4 (rpt-2).